Here is a 177-residue protein sequence, read N- to C-terminus: Transcriptional repressor NrdR (177 aa).

The segment at 3-34 (CPYCGGSETQVKDSRPSEDGAAIRRRRVCPDC) is a zinc-finger region. An ATP-cone domain is found at 49–139 (VVVLKRSGKR…VYKNFREARD (91 aa)). The segment at 148–177 (SDGMPVPAAAPEAEGDPEPEASGRRRAGRP) is disordered.

The protein belongs to the NrdR family. Requires Zn(2+) as cofactor.

Negatively regulates transcription of bacterial ribonucleotide reductase nrd genes and operons by binding to NrdR-boxes. This Methylobacterium radiotolerans (strain ATCC 27329 / DSM 1819 / JCM 2831 / NBRC 15690 / NCIMB 10815 / 0-1) protein is Transcriptional repressor NrdR.